A 396-amino-acid chain; its full sequence is Elongation factor Tu (396 aa).

In terms of domain architecture, tr-type G spans Lys-10–Glu-206. A G1 region spans residues Gly-19–Thr-26. A GTP-binding site is contributed by Gly-19–Thr-26. Residue Thr-26 coordinates Mg(2+). Positions Gly-60 to Ser-64 are G2. Residues Asp-81–Gly-84 are G3. GTP-binding positions include Asp-81–His-85 and Asn-136–Asp-139. A G4 region spans residues Asn-136–Asp-139. The tract at residues Ser-174–Leu-176 is G5.

Belongs to the TRAFAC class translation factor GTPase superfamily. Classic translation factor GTPase family. EF-Tu/EF-1A subfamily. In terms of assembly, monomer.

It is found in the cytoplasm. It carries out the reaction GTP + H2O = GDP + phosphate + H(+). Its function is as follows. GTP hydrolase that promotes the GTP-dependent binding of aminoacyl-tRNA to the A-site of ribosomes during protein biosynthesis. The protein is Elongation factor Tu of Bradyrhizobium sp. (strain BTAi1 / ATCC BAA-1182).